Reading from the N-terminus, the 394-residue chain is MILQAGTPETSLLRVLFLGLSTLAAFSRAQMELHVPPGLNKLEAVEGEEVVLPAWYTMAREESWSHPREVPILIWFLEQEGKEPNQVLSYINGVMTNKPGTALVHSISSRNVSLRLGALQEGDSGTYRCSVNVQNDEGKSIGHSIKSIELKVLVPPAPPSCSLQGVPYVGTNVTLNCKSPRSKPTAQYQWERLAPSSQVFFGPALDAVRGSLKLTNLSIAMSGVYVCKAQNRVGFAKCNVTLDVMTGSKAAVVAGAVVGTFVGLVLIAGLVLLYQRRSKTLEELANDIKEDAIAPRTLPWTKGSDTISKNGTLSSVTSARALRPPKAAPPRPGTFTPTPSVSSQALSSPRLPRVDEPPPQAVSLTPGGVSSSALSRMGAVPVMVPAQSQAGSLV.

An N-terminal signal peptide occupies residues 1-29; that stretch reads MILQAGTPETSLLRVLFLGLSTLAAFSRA. The Extracellular segment spans residues 30–251; the sequence is QMELHVPPGL…LDVMTGSKAA (222 aa). The Ig-like V-type domain occupies 37–146; the sequence is PGLNKLEAVE…EGKSIGHSIK (110 aa). 4 N-linked (GlcNAc...) asparagine glycosylation sites follow: N111, N172, N216, and N239. One can recognise an Ig-like C2-type domain in the interval 159-243; sequence PSCSLQGVPY…GFAKCNVTLD (85 aa). C177 and C227 are disulfide-bonded. A helical transmembrane segment spans residues 252-272; sequence VVAGAVVGTFVGLVLIAGLVL. Residues 273 to 394 lie on the Cytoplasmic side of the membrane; that stretch reads LYQRRSKTLE…PAQSQAGSLV (122 aa). S304 carries the phosphoserine modification. Polar residues-rich tracts occupy residues 304–318 and 335–347; these read SDTISKNGTLSSVTS and FTPTPSVSSQALS. Residues 304-372 form a disordered region; sequence SDTISKNGTL…SLTPGGVSSS (69 aa). Phosphothreonine is present on residues T336 and T338. S340, S343, S348, and S375 each carry phosphoserine.

In terms of assembly, interacts with MAGI1. Highly expressed in the heart and lung. Weakly expressed in the kidney and skin. Expression is restricted to the vascular endothelial cells. Expressed in the kidney, heart and tongue (at protein level). Also expressed on megakaryocytes and activated platelets.

Its subcellular location is the cell junction. The protein localises to the adherens junction. It localises to the tight junction. It is found in the cell membrane. Functionally, can mediate aggregation most likely through a homophilic molecular interaction. The polypeptide is Endothelial cell-selective adhesion molecule (Esam) (Mus musculus (Mouse)).